Consider the following 594-residue polypeptide: Choline dehydrogenase, mitochondrial (594 aa).

The transit peptide at 1–29 (MWCLLRGLGRPGALARGALGQQQSLGARA) directs the protein to the mitochondrion. Residue 42–71 (SYVVVGAGSAGCVLAGRLTEDPAERVLLLE) coordinates FAD. N6-succinyllysine is present on Lys-436. Residues Lys-484 and Lys-496 each carry the N6-acetyllysine; alternate modification. Lys-484 and Lys-496 each carry N6-succinyllysine; alternate. Residue His-511 is the Proton acceptor of the active site. Lys-580 carries the post-translational modification N6-acetyllysine.

Belongs to the GMC oxidoreductase family. Requires FAD as cofactor.

Its subcellular location is the mitochondrion inner membrane. The catalysed reaction is choline + A = betaine aldehyde + AH2. Its pathway is amine and polyamine biosynthesis; betaine biosynthesis via choline pathway; betaine aldehyde from choline (cytochrome c reductase route): step 1/1. The chain is Choline dehydrogenase, mitochondrial (CHDH) from Homo sapiens (Human).